Here is a 257-residue protein sequence, read N- to C-terminus: Imidazole glycerol phosphate synthase subunit HisF (257 aa).

Residues D12 and D131 contribute to the active site.

It belongs to the HisA/HisF family. In terms of assembly, heterodimer of HisH and HisF.

It localises to the cytoplasm. It catalyses the reaction 5-[(5-phospho-1-deoxy-D-ribulos-1-ylimino)methylamino]-1-(5-phospho-beta-D-ribosyl)imidazole-4-carboxamide + L-glutamine = D-erythro-1-(imidazol-4-yl)glycerol 3-phosphate + 5-amino-1-(5-phospho-beta-D-ribosyl)imidazole-4-carboxamide + L-glutamate + H(+). Its pathway is amino-acid biosynthesis; L-histidine biosynthesis; L-histidine from 5-phospho-alpha-D-ribose 1-diphosphate: step 5/9. IGPS catalyzes the conversion of PRFAR and glutamine to IGP, AICAR and glutamate. The HisF subunit catalyzes the cyclization activity that produces IGP and AICAR from PRFAR using the ammonia provided by the HisH subunit. The chain is Imidazole glycerol phosphate synthase subunit HisF from Rhodococcus jostii (strain RHA1).